Consider the following 183-residue polypeptide: uncharacterized protein (183 aa).

Disordered regions lie at residues 1–44 (MPFY…VMTA), 68–137 (GRAG…LGLR), and 163–183 (RDDP…VWPE).

This is an uncharacterized protein from Dryophytes versicolor (chameleon treefrog).